Here is a 613-residue protein sequence, read N- to C-terminus: Myosin light chain kinase 2, skeletal/cardiac muscle (613 aa).

The segment covering 1–20 (MTTENGAVELGSQSLSTEQT) has biased composition (polar residues). The segment at 1–168 (MTTENGAVEL…RGSPAFLHSP (168 aa)) is disordered. The span at 32–55 (SEKEPSAPATEKDLSPPNAKKDPG) shows a compositional bias: basic and acidic residues. Residues 56 to 66 (APDPKNNPDPP) are compositionally biased toward pro residues. The span at 67 to 83 (SLKKDPAKAPGPEKKGD) shows a compositional bias: basic and acidic residues. Residues 95–105 (SGEGDGGGGPA) show a composition bias toward gly residues. The span at 106–122 (EGSEGPPAALPLPTATA) shows a compositional bias: low complexity. Over residues 145-158 (KAGKKAAECREAGR) the composition is skewed to basic and acidic residues. 3 positions are modified to phosphoserine: serine 161, serine 167, and serine 169. Residues 219 to 240 (EKKKEEAEKASGQAGQAKVQGD) are disordered. A Protein kinase domain is found at 302 to 557 (MNSKEALGGG…AEQCLAHPWL (256 aa)). Residues 308 to 316 (LGGGKFGAV) and lysine 331 contribute to the ATP site. Aspartate 423 functions as the Proton acceptor in the catalytic mechanism. Threonine 462 is subject to Phosphothreonine. The interval 591-603 (IAVSAANRFKKIS) is calmodulin-binding.

This sequence belongs to the protein kinase superfamily. CAMK Ser/Thr protein kinase family. In terms of assembly, may interact with centrin.

It is found in the cytoplasm. The enzyme catalyses L-seryl-[myosin light chain] + ATP = O-phospho-L-seryl-[myosin light chain] + ADP + H(+). It carries out the reaction L-threonyl-[myosin light chain] + ATP = O-phospho-L-threonyl-[myosin light chain] + ADP + H(+). Its function is as follows. Implicated in the level of global muscle contraction and cardiac function. Phosphorylates a specific serine in the N-terminus of a myosin light chain. In Mus musculus (Mouse), this protein is Myosin light chain kinase 2, skeletal/cardiac muscle (Mylk2).